Reading from the N-terminus, the 371-residue chain is Envelope glycoprotein M (371 aa).

Residues 1–13 (MAPSHVDKVNTRT) lie on the Intravirion side of the membrane. A helical membrane pass occupies residues 14–34 (WSASIVFMVLTFVNVSVHLVL). Residues 35–79 (SNFPHLGYPCVYYHVVDFERLNMSAYNVMHLHTPMLFLDSVQLVC) lie on the Virion surface side of the membrane. The chain crosses the membrane as a helical span at residues 80 to 100 (YAVFMQLVFLAVTIYYLVCWI). Over 101 to 126 (KISMRKDKGMSLNQSTRDISYMGDSL) the chain is Intravirion. Residues 127–147 (TAFLFILSMDTFQLFTLTMSF) form a helical membrane-spanning segment. The Virion surface segment spans residues 148–151 (RLPS). Residues 152-172 (MIAFMAAVHFFCLTIFNVSMV) traverse the membrane as a helical segment. The Intravirion portion of the chain corresponds to 173–200 (TQYRSYKRSLFFFSRLHPKLKGTVQFRT). The helical transmembrane segment at 201 to 221 (LIVNLVEVALGFNTTVVAMAL) threads the bilayer. Residues 222 to 239 (CYGFGNNFFVRTGHMVLA) lie on the Virion surface side of the membrane. A helical transmembrane segment spans residues 240–260 (VFVVYAIISIIYFLLIEAVFF). Residues 261–264 (QYVK) are Intravirion-facing. Residues 265-285 (VQFGYHLGAFFGLCGLIYPIV) traverse the membrane as a helical segment. Topologically, residues 286-298 (QYDTFLSNEYRTG) are virion surface. The helical transmembrane segment at 299 to 319 (ISWSFGMLFFIWAMFTTCRAV) threads the bilayer. Residues 320–371 (RYFRGRGSGSVKYQALATASGEEVAALSHHDSLESRRLREEEDDDDEDFEDA) lie on the Intravirion side of the membrane. Positions 346–371 (LSHHDSLESRRLREEEDDDDEDFEDA) are disordered. Positions 347 to 359 (SHHDSLESRRLRE) are enriched in basic and acidic residues. Positions 360–371 (EEDDDDEDFEDA) are enriched in acidic residues.

The protein belongs to the herpesviridae glycoprotein M family. As to quaternary structure, interacts (via N-terminus) with gN (via N-terminus). The gM-gN heterodimer forms the gCII complex.

It is found in the virion membrane. It localises to the host Golgi apparatus. Its subcellular location is the host trans-Golgi network. The protein resides in the host endosome membrane. The protein localises to the host nucleus inner membrane. Functionally, envelope glycoprotein important for virion assembly and egress. Plays a role in the correct incorporation of gH-gL into virion membrane. Directs the glycoprotein N (gN) to the host trans-Golgi network. The sequence is that of Envelope glycoprotein M from Homo sapiens (Human).